The sequence spans 295 residues: uncharacterized protein (295 aa).

Positions 1–19 are cleaved as a signal peptide; sequence MFRKFLFIPLLIVTSLVKA. The segment at 274-295 is disordered; sequence KRNNPPLKNNNAKSKNSYETHK. Over residues 276–288 the composition is skewed to low complexity; sequence NNPPLKNNNAKSK.

This is an uncharacterized protein from Rickettsia typhi (strain ATCC VR-144 / Wilmington).